Here is a 418-residue protein sequence, read N- to C-terminus: Queuine tRNA-ribosyltransferase accessory subunit 2 (418 aa).

4 residues coordinate Zn(2+): Cys-325, Cys-327, Cys-330, and His-356.

The protein belongs to the queuine tRNA-ribosyltransferase family. QTRT2 subfamily. In terms of assembly, heterodimer of a catalytic subunit and an accessory subunit. The cofactor is Zn(2+).

The protein localises to the cytoplasm. Its function is as follows. Non-catalytic subunit of the queuine tRNA-ribosyltransferase (TGT) that catalyzes the base-exchange of a guanine (G) residue with queuine (Q) at position 34 (anticodon wobble position) in tRNAs with GU(N) anticodons (tRNA-Asp, -Asn, -His and -Tyr), resulting in the hypermodified nucleoside queuosine (7-(((4,5-cis-dihydroxy-2-cyclopenten-1-yl)amino)methyl)-7-deazaguanosine). The chain is Queuine tRNA-ribosyltransferase accessory subunit 2 from Drosophila erecta (Fruit fly).